Consider the following 176-residue polypeptide: Negative modulator of initiation of replication (176 aa).

It belongs to the SeqA family. As to quaternary structure, homodimer. Polymerizes to form helical filaments.

The protein localises to the cytoplasm. Its function is as follows. Negative regulator of replication initiation, which contributes to regulation of DNA replication and ensures that replication initiation occurs exactly once per chromosome per cell cycle. Binds to pairs of hemimethylated GATC sequences in the oriC region, thus preventing assembly of replication proteins and re-initiation at newly replicated origins. Repression is relieved when the region becomes fully methylated. The sequence is that of Negative modulator of initiation of replication from Hamiltonella defensa subsp. Acyrthosiphon pisum (strain 5AT).